Here is a 131-residue protein sequence, read N- to C-terminus: D-ribose pyranase (131 aa).

Catalysis depends on histidine 20, which acts as the Proton donor. Residues aspartate 28, histidine 98, and 120-122 each bind substrate; that span reads FSN.

This sequence belongs to the RbsD / FucU family. RbsD subfamily. In terms of assembly, homodecamer.

It is found in the cytoplasm. It carries out the reaction beta-D-ribopyranose = beta-D-ribofuranose. Its pathway is carbohydrate metabolism; D-ribose degradation; D-ribose 5-phosphate from beta-D-ribopyranose: step 1/2. In terms of biological role, catalyzes the interconversion of beta-pyran and beta-furan forms of D-ribose. The protein is D-ribose pyranase of Lactobacillus acidophilus (strain ATCC 700396 / NCK56 / N2 / NCFM).